We begin with the raw amino-acid sequence, 279 residues long: NADPH-dependent 7-cyano-7-deazaguanine reductase (279 aa).

86-88 (IES) is a substrate binding site. 88 to 89 (SK) provides a ligand contact to NADPH. Cys187 functions as the Thioimide intermediate in the catalytic mechanism. Catalysis depends on Asp194, which acts as the Proton donor. Substrate is bound at residue 226 to 227 (HE). 255 to 256 (RG) serves as a coordination point for NADPH.

The protein belongs to the GTP cyclohydrolase I family. QueF type 2 subfamily. In terms of assembly, homodimer.

Its subcellular location is the cytoplasm. It carries out the reaction 7-aminomethyl-7-carbaguanine + 2 NADP(+) = 7-cyano-7-deazaguanine + 2 NADPH + 3 H(+). Its pathway is tRNA modification; tRNA-queuosine biosynthesis. Functionally, catalyzes the NADPH-dependent reduction of 7-cyano-7-deazaguanine (preQ0) to 7-aminomethyl-7-deazaguanine (preQ1). This Haemophilus influenzae (strain PittEE) protein is NADPH-dependent 7-cyano-7-deazaguanine reductase.